Reading from the N-terminus, the 98-residue chain is uncharacterized protein (98 aa).

The next 2 helical transmembrane spans lie at 2–22 and 70–90; these read IVTL…GLWW and AAKA…LPIL.

Its subcellular location is the cell membrane. This is an uncharacterized protein from Sinorhizobium fredii (strain NBRC 101917 / NGR234).